Here is a 275-residue protein sequence, read N- to C-terminus: NH(3)-dependent NAD(+) synthetase (275 aa).

Residue 46–53 (GISGGQDS) participates in ATP binding. Mg(2+) is bound at residue D52. R140 serves as a coordination point for deamido-NAD(+). T160 serves as a coordination point for ATP. E165 is a Mg(2+) binding site. Deamido-NAD(+) contacts are provided by K173 and D180. The ATP site is built by K189 and T211. Position 260 to 261 (260 to 261 (HK)) interacts with deamido-NAD(+).

It belongs to the NAD synthetase family. As to quaternary structure, homodimer.

It catalyses the reaction deamido-NAD(+) + NH4(+) + ATP = AMP + diphosphate + NAD(+) + H(+). It participates in cofactor biosynthesis; NAD(+) biosynthesis; NAD(+) from deamido-NAD(+) (ammonia route): step 1/1. Catalyzes the ATP-dependent amidation of deamido-NAD to form NAD. Uses ammonia as a nitrogen source. The protein is NH(3)-dependent NAD(+) synthetase of Escherichia coli O127:H6 (strain E2348/69 / EPEC).